The chain runs to 264 residues: PDZ domain-containing protein 9 (264 aa).

One can recognise a PDZ domain in the interval Gln30–Arg109.

In Homo sapiens (Human), this protein is PDZ domain-containing protein 9 (PDZD9).